The following is a 665-amino-acid chain: Dual specificity protein phosphatase 16 (665 aa).

A Rhodanese domain is found at 22 to 137; the sequence is GTEKVLLIDS…FSRCFPGLCE (116 aa). Lys-55 bears the (Microbial infection) N6-acetyllysine; by EIS mark. Positions 158–300 constitute a Tyrosine-protein phosphatase domain; it reads GPTRILPNLY…LLDYEKKIKN (143 aa). Catalysis depends on Cys-244, which acts as the Phosphocysteine intermediate. Residues 321-368 form a disordered region; sequence EPVPAVSEGGQKSETPLSPPCADSATSEAAGQRPVHPASVPSVPSVQP. Low complexity predominate over residues 354-368; sequence PVHPASVPSVPSVQP. Ser-446 carries the phosphoserine; by MAPK1 modification. Composition is skewed to polar residues over residues 449–458 and 487–499; these read QELSEQTPET and VRTSSSGTAQRSL. Disordered stretches follow at residues 449–505 and 597–665; these read QELS…PLHR and VRRR…IEVS. Ser-501 is subject to Phosphoserine. A compositionally biased stretch (basic and acidic residues) spans 602–622; the sequence is KPSDRADSRRSWHEESPFEKQ.

It belongs to the protein-tyrosine phosphatase family. Non-receptor class dual specificity subfamily. In terms of assembly, interacts with ARRB2. Phosphorylated at Ser-446 by MAPK1/ERK2, which prevents its degradation, and thereby stabilizes it and blocks JNK MAPK activity. Post-translationally, (Microbial infection) Acetylated at Lys-55 by the M.tuberculosis Eis protein; this leads to the inhibition of JNK-dependent autophagy, phagosome maturation, and ROS (reactive oxygen species) generation for enhanced intracellular survival of M.tuberculosis.

It is found in the cytoplasm. It localises to the nucleus. The protein resides in the cytoplasmic vesicle. It carries out the reaction O-phospho-L-tyrosyl-[protein] + H2O = L-tyrosyl-[protein] + phosphate. It catalyses the reaction O-phospho-L-seryl-[protein] + H2O = L-seryl-[protein] + phosphate. The catalysed reaction is O-phospho-L-threonyl-[protein] + H2O = L-threonyl-[protein] + phosphate. Functionally, dual specificity protein phosphatase involved in the inactivation of MAP kinases. Dephosphorylates MAPK10 bound to ARRB2. This chain is Dual specificity protein phosphatase 16 (DUSP16), found in Homo sapiens (Human).